A 523-amino-acid polypeptide reads, in one-letter code: Cytochrome P450 monooxygenase bsc5 (523 aa).

A helical membrane pass occupies residues 16–36 (MQLHWTVLGLLPVLFIAILGP). N-linked (GlcNAc...) asparagine glycans are attached at residues asparagine 178, asparagine 281, and asparagine 403. Residue cysteine 459 participates in heme binding.

This sequence belongs to the cytochrome P450 family. It depends on heme as a cofactor.

The protein localises to the membrane. The protein operates within mycotoxin biosynthesis. Functionally, cytochrome P450 monooxygenase; part of the gene cluster that mediates the biosynthesis of the diterpene glucoside brassicicene C. In the first step of the brassicicene C biosynthesis, the bifunctional diterpene synthase bsc8 that possesses both prenyl transferase and terpene cyclase activity, converts isopentenyl diphosphate and dimethylallyl diphosphate into geranylgeranyl diphosphate (GGDP) that is further converted into fusicocca-2,10(14)-diene, the first precursor for brassicicene C. Fusicocca-2,10(14)-diene is then substrate of cytochrome P450 monooxygenase bsc1 for hydroxylation at the C-8 position. Oxidation at C-16 position to aldehyde is then catalyzed by the cytochrome P450 monooyxygenase bsc7, yielding fusicocca-2,10(14)-diene-8-beta,16-diol. Follows the isomerization of the double bond and reduction of aldehyde to alcohol catalyzed by the short-chain dehydrogenase/reductase bsc3 to yield the diol compound fusicocca-1,10(14)-diene-8 beta,16-diol. The next step is the oxidation at the C-3 position of fusicocca-2,10(14)-diene-8-beta,16-diol catalyzed by the alpha-ketoglutarate dependent dioxygenase bsc9, to produce a triol compound. Methylation of the hydroxy group at position 16 is performed by the methyltransferase bsc6. 16-O-methylation is followed by oxidation at the C-13 position to ketone and an alkyl shift of the methyl group leads to brassicicene C. Although the probable acetyltransferase bsc4 is included in the gene cluster, no acetylation reactions are necessary for brassicicene C biosynthesis. However, the fact that brassicicene E, which is a structurally related compound having an acetoxy group at position 12, was previously isolated from another strain of A.brassicicola suggests that the ATCC 96836 strain might also produce a small amount of brassicicene E. This chain is Cytochrome P450 monooxygenase bsc5, found in Alternaria brassicicola (Dark leaf spot agent).